The following is a 339-amino-acid chain: D-erythrose-4-phosphate dehydrogenase (339 aa).

12–13 (RI) provides a ligand contact to NAD(+). Residues 154–156 (SCT), Arg-200, 213–214 (TK), and Arg-236 contribute to the substrate site. Cys-155 functions as the Nucleophile in the catalytic mechanism. Asn-318 is an NAD(+) binding site.

The protein belongs to the glyceraldehyde-3-phosphate dehydrogenase family. Epd subfamily. Homotetramer.

It is found in the cytoplasm. The enzyme catalyses D-erythrose 4-phosphate + NAD(+) + H2O = 4-phospho-D-erythronate + NADH + 2 H(+). Its pathway is cofactor biosynthesis; pyridoxine 5'-phosphate biosynthesis; pyridoxine 5'-phosphate from D-erythrose 4-phosphate: step 1/5. Functionally, catalyzes the NAD-dependent conversion of D-erythrose 4-phosphate to 4-phosphoerythronate. This Proteus mirabilis (strain HI4320) protein is D-erythrose-4-phosphate dehydrogenase.